The primary structure comprises 105 residues: Class I hydrophobin 1 (105 aa).

Positions 1-17 (MQFTSFAILAISAVASA) are cleaved as a signal peptide. 4 disulfides stabilise this stretch: Cys-36–Cys-85, Cys-44–Cys-78, Cys-45–Cys-63, and Cys-86–Cys-100. N-linked (GlcNAc...) asparagine glycosylation is found at Asn-48, Asn-67, and Asn-97.

It belongs to the fungal hydrophobin family. In terms of assembly, self-assembles to form functional amyloid fibrils called rodlets. Self-assembly into fibrillar rodlets occurs spontaneously at hydrophobic:hydrophilic interfaces and the rodlets further associate laterally to form amphipathic monolayers. As to expression, abundant on conidia and aerial structures formed in vitro and emerging from disease lesions on infected tomato plants.

Its subcellular location is the secreted. The protein localises to the cell wall. Its function is as follows. Aerial growth, conidiation, and dispersal of filamentous fungi in the environment rely upon a capability of their secreting small amphipathic proteins called hydrophobins (HPBs) with low sequence identity. Class I can self-assemble into an outermost layer of rodlet bundles on aerial cell surfaces, conferring cellular hydrophobicity that supports fungal growth, development and dispersal; whereas Class II form highly ordered films at water-air interfaces through intermolecular interactions but contribute nothing to the rodlet structure. Hcf-1 is a class I hydrophobin that is not necessary for the development of hyphae or conidia but acts as the main determinant of conidium hydrophobicity and, thus, is required for efficient water-mediated dispersal of conidia. Forms a component of the rodlet layer, but other hydrophobins must also participate in this proces. This is Class I hydrophobin 1 from Passalora fulva (Tomato leaf mold).